A 256-amino-acid polypeptide reads, in one-letter code: Nuclear shuttle protein (256 aa).

The Bipartite nuclear localization signal motif lies at 21–42 (NYGFKRTFVVKRGDAKRRQTQV). A Nuclear localization signal motif is present at residues 81–96 (QLCKTQPNRSRSYIKL). The interval 150 to 187 (ELFGARIHSLGNLAVTPALKERFYILHVLKRVISVEKD) is interaction with Arabidopsis thaliana NSI protein.

It belongs to the begomovirus nuclear shuttle protein family. In terms of assembly, binds to single-stranded and double-stranded viral DNA. Interacts with the host nuclear shuttle interacting (NSI) protein. This interaction may allow NSP to recruit NSI monomers to the viral genome and thus regulate nuclear export of viral genome by NSP.

The protein resides in the host nucleus. Its subcellular location is the host cytoplasm. It localises to the host cell membrane. Its function is as follows. Binds to the genomic viral ssDNA, shuttles it into and out of the cell nucleus. Begomoviruses use 2 proteins to transport their DNA from cell to cell. The nuclear shuttle protein (NSP) shuttles it between nucleus and cytoplasm and the movement protein (MP) probably transports the DNA-NSP complex to the cell periphery and facilitates movement across the cell wall. The chain is Nuclear shuttle protein from Pepper huasteco yellow vein virus (PHYVV).